A 130-amino-acid polypeptide reads, in one-letter code: Small ribosomal subunit protein uS11 (130 aa).

This sequence belongs to the universal ribosomal protein uS11 family. In terms of assembly, part of the 30S ribosomal subunit. Interacts with proteins S7 and S18. Binds to IF-3.

Its function is as follows. Located on the platform of the 30S subunit, it bridges several disparate RNA helices of the 16S rRNA. Forms part of the Shine-Dalgarno cleft in the 70S ribosome. This Caldicellulosiruptor bescii (strain ATCC BAA-1888 / DSM 6725 / KCTC 15123 / Z-1320) (Anaerocellum thermophilum) protein is Small ribosomal subunit protein uS11.